The primary structure comprises 396 residues: MGIKHLYQLIQEHSPDAIKTGEIKNQFGRKVAIDASMSIYSFLIAVRSDGQQLMSETGETTSHLMGLFYRTLRMVDNGIKPLYVFDGAPPKLKSGELAKRFQRKSEAHAAAEEAKETGTAEDVEKFSRRTVRVTREHNEECRRLLKLMGIPFIIAPTEAEAQCATLARGGKVYAAASEDMDTLTFNTPILLRHLTFSEQRKEPILEIHLDKVLEGLEMEREQPQFIDLCILLGCDYLDPIKGIGPSTALKLIRDHKTLEGVVAHIQSDQKKLTLPEDWPFADARQLFLEPDVCPADAPECDFKWEAPDIEGLVKFLVEEKHFNEDRVRNGAAKLQKNMKSAQQSRLEGFFKPVERTPEEKASLKRKADEKLSEKKKKQKEEAKAKKQAKSKPRTAG.

Residues 1–104 (MGIKHLYQLI…GELAKRFQRK (104 aa)) form an N-domain region. Aspartate 34 contacts Mg(2+). Residues arginine 47 and arginine 70 each coordinate DNA. Residues aspartate 86, glutamate 158, glutamate 160, aspartate 179, and aspartate 181 each coordinate Mg(2+). Residues 122 to 255 (DVEKFSRRTV…STALKLIRDH (134 aa)) form an I-domain region. Glutamate 158 is a binding site for DNA. Glycine 233 and aspartate 235 together coordinate DNA. Aspartate 235 serves as a coordination point for Mg(2+). Residues 338–396 (MKSAQQSRLEGFFKPVERTPEEKASLKRKADEKLSEKKKKQKEEAKAKKQAKSKPRTAG) form a disordered region. The interval 342 to 350 (QQSRLEGFF) is interaction with PCNA. Residues 352–384 (PVERTPEEKASLKRKADEKLSEKKKKQKEEAKA) are compositionally biased toward basic and acidic residues. The segment covering 385–396 (KKQAKSKPRTAG) has biased composition (basic residues).

It belongs to the XPG/RAD2 endonuclease family. FEN1 subfamily. In terms of assembly, interacts with PCNA. Three molecules of FEN1 bind to one PCNA trimer with each molecule binding to one PCNA monomer. PCNA stimulates the nuclease activity without altering cleavage specificity. It depends on Mg(2+) as a cofactor. Post-translationally, phosphorylated. Phosphorylation upon DNA damage induces relocalization to the nuclear plasma.

It is found in the nucleus. The protein resides in the nucleolus. It localises to the nucleoplasm. Its subcellular location is the mitochondrion. Functionally, structure-specific nuclease with 5'-flap endonuclease and 5'-3' exonuclease activities involved in DNA replication and repair. During DNA replication, cleaves the 5'-overhanging flap structure that is generated by displacement synthesis when DNA polymerase encounters the 5'-end of a downstream Okazaki fragment. It enters the flap from the 5'-end and then tracks to cleave the flap base, leaving a nick for ligation. Also involved in the long patch base excision repair (LP-BER) pathway, by cleaving within the apurinic/apyrimidinic (AP) site-terminated flap. Acts as a genome stabilization factor that prevents flaps from equilibrating into structures that lead to duplications and deletions. Also possesses 5'-3' exonuclease activity on nicked or gapped double-stranded DNA, and exhibits RNase H activity. Also involved in replication and repair of rDNA and in repairing mitochondrial DNA. The polypeptide is Flap endonuclease 1 (Phaeosphaeria nodorum (strain SN15 / ATCC MYA-4574 / FGSC 10173) (Glume blotch fungus)).